Consider the following 405-residue polypeptide: S-arrestin (405 aa).

At Thr-234 the chain carries Phosphothreonine.

This sequence belongs to the arrestin family. As to quaternary structure, monomer. Homodimer. Homotetramer. Interacts with RHO (via the phosphorylated C-terminus).

It is found in the cell projection. The protein localises to the cilium. It localises to the photoreceptor outer segment. Its subcellular location is the membrane. Functionally, binds to photoactivated, phosphorylated RHO and terminates RHO signaling via G-proteins by competing with G-proteins for the same binding site on RHO. May play a role in preventing light-dependent degeneration of retinal photoreceptor cells. This is S-arrestin (SAG) from Canis lupus familiaris (Dog).